Here is a 1087-residue protein sequence, read N- to C-terminus: Kinesin-like protein KIN-14F (1087 aa).

In terms of domain architecture, Calponin-homology (CH) spans 1-110 (MDQGAMETLP…CILCLKGFYE (110 aa)). The interval 136 to 155 (SSPPQYGIGSESTTDESVSL) is disordered. One can recognise a Kinesin motor domain in the interval 377–705 (TIRVYCRVRP…LKFAQRVASI (329 aa)). Position 461 to 468 (461 to 468 (GQTGSGKT)) interacts with ATP. A coiled-coil region spans residues 710-749 (ARSNKETGEIRDLKDEISSLKSAMEKKEAELEQLRSGSIR). 3 disordered regions span residues 740–858 (LEQL…PVSR), 923–949 (QGGV…FQKL), and 1004–1087 (DSTL…FMVP). 3 stretches are compositionally biased toward polar residues: residues 744 to 754 (RSGSIRNTTEC), 780 to 797 (PQPN…CSTG), and 836 to 856 (TDRA…NLPV). Residues 1017-1033 (EPPSKSKNAQRNSSKNS) are compositionally biased toward polar residues. Residues 1042–1054 (YAHEDTSLVDDKP) are compositionally biased toward basic and acidic residues. Basic residues predominate over residues 1076–1087 (SRSTHHARFMVP).

This sequence belongs to the TRAFAC class myosin-kinesin ATPase superfamily. Kinesin family. KIN-14 subfamily. Interacts (via C-terminus) with VDAC3. As to expression, expressed in roots, leaves, stems and flowers (at protein level).

Its subcellular location is the cytoplasm. It localises to the cytoskeleton. The protein localises to the mitochondrion. Its function is as follows. Required for keeping the ATP levels stable and balancing the aerobic respiration pathways during seed germination at low temperature. This is Kinesin-like protein KIN-14F from Arabidopsis thaliana (Mouse-ear cress).